Reading from the N-terminus, the 103-residue chain is Small ribosomal subunit protein uS10 (103 aa).

Belongs to the universal ribosomal protein uS10 family. In terms of assembly, part of the 30S ribosomal subunit.

Its function is as follows. Involved in the binding of tRNA to the ribosomes. In Fusobacterium nucleatum subsp. nucleatum (strain ATCC 25586 / DSM 15643 / BCRC 10681 / CIP 101130 / JCM 8532 / KCTC 2640 / LMG 13131 / VPI 4355), this protein is Small ribosomal subunit protein uS10.